The following is a 303-amino-acid chain: Protein UL24 homolog (303 aa).

A compositionally biased stretch (basic and acidic residues) spans 235–249 (KFRDRTNKKSNDQLR). The tract at residues 235-280 (KFRDRTNKKSNDQLRARQANARPCKKKQHNNKRLRNNRKHGGKVSR) is disordered. The span at 257-277 (PCKKKQHNNKRLRNNRKHGGK) shows a compositional bias: basic residues.

It belongs to the herpesviridae UL24 family.

Its subcellular location is the virion. It localises to the host cytoplasm. The protein resides in the host nucleus. It is found in the host nucleolus. The protein localises to the host Golgi apparatus. Its function is as follows. May participate in nuclear egress of viral particles. Plays a role in the dispersal of several host nucleolar proteins including NCL/nucleolin and NPM1. Since deletion of host NCL/nucleolin negatively impact on nuclear egress, UL24 supposedly acts on this process through its effect on host nucleoli. The polypeptide is Protein UL24 homolog (20) (Saimiri sciureus (Common squirrel monkey)).